An 89-amino-acid chain; its full sequence is Putative defensin-like protein 40 (89 aa).

Positions 1-26 (MAGIANGVGLLISFMLICGGMPKGHA) are cleaved as a signal peptide. 4 cysteine pairs are disulfide-bonded: Cys-33–Cys-88, Cys-46–Cys-69, Cys-55–Cys-81, and Cys-59–Cys-83.

Belongs to the DEFL family.

It is found in the secreted. In Arabidopsis thaliana (Mouse-ear cress), this protein is Putative defensin-like protein 40.